Consider the following 366-residue polypeptide: MSLEESPKRKIRCPEVQVPQSNIDEELEKIVEQIKARIYVVGVGGAGCNTVNRMMEVGVTGAKIIAVNTDAQDLLKVKAHQKILIGKELTRGLGAGNDPKIGEEAAKESERELRDALEGADMVFITCGLGGGTGTGAAPVIAEIARKMGELTVSVVTLPFTMEGIRRAKNAEYGLKRLVKYSDTVIVIPNDKLLEVAPKLPIQMAFKVADEILVQAVKGITELITKPGLVNLDFNDVRAVMKDRGVAMIGIGESDSEKRALEAAEQALNSPLLDVDISGASGALIHISGADVKLEEAQQIIEYVTRNVDSKAQVIWGIQLEPELEKTIRVMVVITGVTSRYITPEEETPLETPEESPSIEISIPEL.

Residues 45–49, 132–134, glutamate 163, arginine 167, and aspartate 210 each bind GTP; these read GAGCN and GTG. Residues 344-354 are compositionally biased toward acidic residues; it reads PEEETPLETPE. Residues 344 to 366 are disordered; sequence PEEETPLETPEESPSIEISIPEL. A compositionally biased stretch (low complexity) spans 355 to 366; it reads ESPSIEISIPEL.

This sequence belongs to the FtsZ family. In terms of assembly, homodimer. Polymerizes to form a dynamic ring structure in a strictly GTP-dependent manner. Interacts directly with several other division proteins.

The protein resides in the cytoplasm. Functionally, essential cell division protein that forms a contractile ring structure (Z ring) at the future cell division site. The regulation of the ring assembly controls the timing and the location of cell division. One of the functions of the FtsZ ring is to recruit other cell division proteins to the septum to produce a new cell wall between the dividing cells. Binds GTP and shows GTPase activity. The chain is Cell division protein FtsZ 1 from Pyrococcus woesei.